The following is a 122-amino-acid chain: Large ribosomal subunit protein uL14 (122 aa).

Belongs to the universal ribosomal protein uL14 family. Part of the 50S ribosomal subunit. Forms a cluster with proteins L3 and L19. In the 70S ribosome, L14 and L19 interact and together make contacts with the 16S rRNA in bridges B5 and B8.

Its function is as follows. Binds to 23S rRNA. Forms part of two intersubunit bridges in the 70S ribosome. The chain is Large ribosomal subunit protein uL14 from Nocardioides sp. (strain ATCC BAA-499 / JS614).